The primary structure comprises 165 residues: Cytochrome c-type biogenesis protein CcmE (165 aa).

Over methionine 1 to arginine 7 the chain is Cytoplasmic. The chain crosses the membrane as a helical; Signal-anchor for type II membrane protein span at residues leucine 8–alanine 28. Residues phenylalanine 29 to arginine 165 are Periplasmic-facing. Heme-binding residues include histidine 124 and tyrosine 128. A compositionally biased stretch (low complexity) spans glutamine 144–glycine 154. The interval glutamine 144 to arginine 165 is disordered.

Belongs to the CcmE/CycJ family.

It localises to the cell inner membrane. Functionally, heme chaperone required for the biogenesis of c-type cytochromes. Transiently binds heme delivered by CcmC and transfers the heme to apo-cytochromes in a process facilitated by CcmF and CcmH. The polypeptide is Cytochrome c-type biogenesis protein CcmE (Rhizobium etli (strain CIAT 652)).